The primary structure comprises 142 residues: RERAGCAKGWIPFDGRCYGFFPQELSWRRAEGFCQRLGARTHLASIHSEEEHQAIVSMLASSQPYSDSEEEAGEEVWIGLHRPLGRRNWEWSDGTKLDYGSWYRDVFLRRRACVALEDTTDFATWDVELCSDRKPFICEYRT.

Disulfide bonds link cysteine 6-cysteine 17, cysteine 34-cysteine 138, and cysteine 113-cysteine 130. One can recognise a C-type lectin domain in the interval 13 to 139 (FDGRCYGFFP…CSDRKPFICE (127 aa)). Phosphoserine is present on residues serine 62, serine 66, and serine 68.

It is found in the secreted. The protein localises to the extracellular space. The protein resides in the extracellular matrix. This is Struthiocalcin-2 from Struthio camelus (Common ostrich).